Consider the following 1169-residue polypeptide: Chromosome partition protein Smc (1169 aa).

32 to 39 (PNGSGKSN) provides a ligand contact to ATP. A coiled-coil region spans residues 166-507 (DEISGIAEFD…RIKALKEMEE (342 aa)). The 114-residue stretch at 523–636 (PGIIDIVGNL…ENIDIAKELA (114 aa)) folds into the SMC hinge domain. Residues 676-1030 (SKLNKIADEI…NKKKEVFMEV (355 aa)) adopt a coiled-coil conformation.

The protein belongs to the SMC family. As to quaternary structure, homodimer.

The protein resides in the cytoplasm. Functionally, required for chromosome condensation and partitioning. In Methanocaldococcus jannaschii (strain ATCC 43067 / DSM 2661 / JAL-1 / JCM 10045 / NBRC 100440) (Methanococcus jannaschii), this protein is Chromosome partition protein Smc.